We begin with the raw amino-acid sequence, 84 residues long: CDC42 small effector protein 2 (84 aa).

Residues C10 and C11 are each lipidated (S-palmitoyl cysteine). The CRIB domain occupies 29–42 (IGEPTNFAHTAHVG). 2 positions are modified to phosphoserine: S43 and S52.

The protein belongs to the CDC42SE/SPEC family. Interacts with CDC42 (in GTP-bound form). Interacts weakly with RAC1 and not at all with RHOA.

It localises to the cytoplasm. The protein localises to the cytoskeleton. Its subcellular location is the cell membrane. It is found in the cell projection. The protein resides in the phagocytic cup. Probably involved in the organization of the actin cytoskeleton by acting downstream of CDC42, inducing actin filament assembly. Alters CDC42-induced cell shape changes. In activated T-cells, may play a role in CDC42-mediated F-actin accumulation at the immunological synapse. May play a role in early contractile events in phagocytosis in macrophages. This chain is CDC42 small effector protein 2 (CDC42SE2), found in Pongo abelii (Sumatran orangutan).